The chain runs to 224 residues: Ribose-5-phosphate isomerase A 2 (224 aa).

Substrate is bound by residues 27–30 (SGST), 83–86 (DGTD), and 96–99 (KGGG). E105 functions as the Proton acceptor in the catalytic mechanism. K123 lines the substrate pocket.

This sequence belongs to the ribose 5-phosphate isomerase family. As to quaternary structure, homodimer.

It catalyses the reaction aldehydo-D-ribose 5-phosphate = D-ribulose 5-phosphate. It participates in carbohydrate degradation; pentose phosphate pathway; D-ribose 5-phosphate from D-ribulose 5-phosphate (non-oxidative stage): step 1/1. Catalyzes the reversible conversion of ribose-5-phosphate to ribulose 5-phosphate. The polypeptide is Ribose-5-phosphate isomerase A 2 (Oceanobacillus iheyensis (strain DSM 14371 / CIP 107618 / JCM 11309 / KCTC 3954 / HTE831)).